The chain runs to 296 residues: 4-amino-4-deoxyprephenate dehydrogenase (296 aa).

The Prephenate/arogenate dehydrogenase domain maps to 9–288 (RCVVVGGAGA…EHGAELERLC (280 aa)).

Belongs to the prephenate/arogenate dehydrogenase family.

It catalyses the reaction 4-amino-4-deoxyprephenate + NAD(+) = 3-(4-aminophenyl)pyruvate + CO2 + NADH + H(+). Its pathway is antibiotic biosynthesis. Functionally, involved in pristinamycin I biosynthesis. Probably catalyzes the formation of 3-(4-aminophenyl)pyruvate from 4-amino-4-deoxyprephenate. This is 4-amino-4-deoxyprephenate dehydrogenase from Streptomyces pristinaespiralis.